Here is a 1052-residue protein sequence, read N- to C-terminus: Multidrug resistance protein MdtB (1052 aa).

A run of 11 helical transmembrane segments spans residues 15–37, 345–362, 367–389, 396–418, 438–460, 472–494, 535–557, 867–889, 909–931, 968–990, and 1000–1022; these read LFILRPVATTLFMIAILLAGIIG, FELLLAIALVVMVIYLFL, ATIIPSIAVPLSLVGTFAAMYFL, LTLMALTIATGFVVDDAIVVIEN, GEIGFTIISLTFSLIAVLIPLLF, FAVTLAVAILISAVVSLTLTPMM, HPWLTLSVAFSTLVLTVILYLLI, LWLIIAAIVAMYIVLGVLYESFI, LMLTGNELDVIAIIGIILLIGIV, ILMTTLAALFGALPLMLSTGVGA, and MVGGLIVSQVLTLFTTPVIYLLF. The disordered stretch occupies residues 1032 to 1052; it reads KNRHRDEDIDSSELLNGQEPQ.

Belongs to the resistance-nodulation-cell division (RND) (TC 2.A.6) family. MdtB subfamily. In terms of assembly, part of a tripartite efflux system composed of MdtA, MdtB and MdtC. MdtB forms a heteromultimer with MdtC.

It is found in the cell inner membrane. The polypeptide is Multidrug resistance protein MdtB (Yersinia pseudotuberculosis serotype I (strain IP32953)).